The following is a 323-amino-acid chain: uncharacterized protein (323 aa).

The tract at residues methionine 1–asparagine 21 is disordered. A lipid anchor (N-myristoyl glycine; by host) is attached at glycine 2.

This is an uncharacterized protein from Acanthamoeba polyphaga (Amoeba).